The chain runs to 378 residues: Cobalt-precorrin-5B C(1)-methyltransferase (378 aa).

It belongs to the CbiD family.

It carries out the reaction Co-precorrin-5B + S-adenosyl-L-methionine = Co-precorrin-6A + S-adenosyl-L-homocysteine. The protein operates within cofactor biosynthesis; adenosylcobalamin biosynthesis; cob(II)yrinate a,c-diamide from sirohydrochlorin (anaerobic route): step 6/10. In terms of biological role, catalyzes the methylation of C-1 in cobalt-precorrin-5B to form cobalt-precorrin-6A. The chain is Cobalt-precorrin-5B C(1)-methyltransferase from Methanococcus aeolicus (strain ATCC BAA-1280 / DSM 17508 / OCM 812 / Nankai-3).